The sequence spans 22 residues: Peptide PGLa-R1 (22 aa).

L22 is modified (leucine amide).

Expressed by the skin glands.

The protein localises to the secreted. Its function is as follows. Antimicrobial peptide. This chain is Peptide PGLa-R1, found in Xenopus ruwenzoriensis (Uganda clawed frog).